An 87-amino-acid chain; its full sequence is Toxin CngtIII (87 aa).

Residues 1–19 (MNSLLMITACLVLFGTVWA) form the signal peptide. The region spanning 20 to 85 (KEGYLVNKST…TYPLPNKTCS (66 aa)) is the LCN-type CS-alpha/beta domain. Disulfide bonds link Cys-31–Cys-84, Cys-35–Cys-60, Cys-44–Cys-65, and Cys-48–Cys-67.

This sequence belongs to the long (4 C-C) scorpion toxin superfamily. Sodium channel inhibitor family. Beta subfamily. In terms of tissue distribution, expressed by the venom gland.

Its subcellular location is the secreted. In terms of biological role, beta toxins bind voltage-independently at site-4 of sodium channels (Nav) and shift the voltage of activation toward more negative potentials thereby affecting sodium channel activation and promoting spontaneous and repetitive firing. The polypeptide is Toxin CngtIII (Centruroides noxius (Mexican scorpion)).